A 335-amino-acid chain; its full sequence is Biotin synthase (335 aa).

A Radical SAM core domain is found at 51 to 278 (NTVQLSSLLS…LAKVRLSAGR (228 aa)). [4Fe-4S] cluster is bound by residues C66, C70, and C73. C110, C141, C201, and R273 together coordinate [2Fe-2S] cluster.

Belongs to the radical SAM superfamily. Biotin synthase family. As to quaternary structure, homodimer. The cofactor is [4Fe-4S] cluster. [2Fe-2S] cluster is required as a cofactor.

It catalyses the reaction (4R,5S)-dethiobiotin + (sulfur carrier)-SH + 2 reduced [2Fe-2S]-[ferredoxin] + 2 S-adenosyl-L-methionine = (sulfur carrier)-H + biotin + 2 5'-deoxyadenosine + 2 L-methionine + 2 oxidized [2Fe-2S]-[ferredoxin]. The protein operates within cofactor biosynthesis; biotin biosynthesis; biotin from 7,8-diaminononanoate: step 2/2. In terms of biological role, catalyzes the conversion of dethiobiotin (DTB) to biotin by the insertion of a sulfur atom into dethiobiotin via a radical-based mechanism. The protein is Biotin synthase of Bordetella bronchiseptica (strain ATCC BAA-588 / NCTC 13252 / RB50) (Alcaligenes bronchisepticus).